Consider the following 482-residue polypeptide: Glutamate--tRNA ligase (482 aa).

The 'HIGH' region signature appears at 9–19 (PSPTGPIHVGN). Zn(2+)-binding residues include C106, C108, C133, and D135. Residues 250–254 (KLSKR) carry the 'KMSKS' region motif. Residue K253 participates in ATP binding.

The protein belongs to the class-I aminoacyl-tRNA synthetase family. Glutamate--tRNA ligase type 1 subfamily. As to quaternary structure, monomer. Zn(2+) serves as cofactor.

The protein localises to the cytoplasm. The catalysed reaction is tRNA(Glu) + L-glutamate + ATP = L-glutamyl-tRNA(Glu) + AMP + diphosphate. In terms of biological role, catalyzes the attachment of glutamate to tRNA(Glu) in a two-step reaction: glutamate is first activated by ATP to form Glu-AMP and then transferred to the acceptor end of tRNA(Glu). In Symbiobacterium thermophilum (strain DSM 24528 / JCM 14929 / IAM 14863 / T), this protein is Glutamate--tRNA ligase.